The following is a 328-amino-acid chain: Oligopeptide transport ATP-binding protein AppD (328 aa).

In terms of domain architecture, ABC transporter spans 5 to 256; the sequence is LEVNNLKTYF…PLHPYTEGLL (252 aa). ATP is bound at residue 41–48; it reads GESGSGKS.

It belongs to the ABC transporter superfamily.

The protein localises to the cell membrane. Functionally, this protein is a component of an oligopeptide permease, a binding protein-dependent transport system. This APP system can completely substitute for the OPP system in both sporulation and genetic competence, though, unlike OPP, is incapable of transporting tripeptides. Probably responsible for energy coupling to the transport system. This chain is Oligopeptide transport ATP-binding protein AppD (appD), found in Bacillus subtilis (strain 168).